Consider the following 176-residue polypeptide: NAD(P)H-quinone oxidoreductase subunit 6, chloroplastic (176 aa).

A run of 5 helical transmembrane segments spans residues 10–30 (ILLV…VLFT), 32–52 (PIFS…FHIL), 61–81 (AQLL…VMFM), 92–112 (LWTV…FSLI), and 152–172 (FYLP…GAIA).

It belongs to the complex I subunit 6 family. In terms of assembly, NDH is composed of at least 16 different subunits, 5 of which are encoded in the nucleus.

It localises to the plastid. The protein localises to the chloroplast thylakoid membrane. It catalyses the reaction a plastoquinone + NADH + (n+1) H(+)(in) = a plastoquinol + NAD(+) + n H(+)(out). The enzyme catalyses a plastoquinone + NADPH + (n+1) H(+)(in) = a plastoquinol + NADP(+) + n H(+)(out). NDH shuttles electrons from NAD(P)H:plastoquinone, via FMN and iron-sulfur (Fe-S) centers, to quinones in the photosynthetic chain and possibly in a chloroplast respiratory chain. The immediate electron acceptor for the enzyme in this species is believed to be plastoquinone. Couples the redox reaction to proton translocation, and thus conserves the redox energy in a proton gradient. This is NAD(P)H-quinone oxidoreductase subunit 6, chloroplastic (ndhG) from Drimys granadensis.